The following is a 146-amino-acid chain: Tol-Pal system protein TolR (146 aa).

A helical transmembrane segment spans residues 16-36 (VVPYIDVMLVLLVIFMVTAPM).

The protein belongs to the ExbD/TolR family. The Tol-Pal system is composed of five core proteins: the inner membrane proteins TolA, TolQ and TolR, the periplasmic protein TolB and the outer membrane protein Pal. They form a network linking the inner and outer membranes and the peptidoglycan layer.

Its subcellular location is the cell inner membrane. Part of the Tol-Pal system, which plays a role in outer membrane invagination during cell division and is important for maintaining outer membrane integrity. The sequence is that of Tol-Pal system protein TolR from Pseudomonas aeruginosa (strain ATCC 15692 / DSM 22644 / CIP 104116 / JCM 14847 / LMG 12228 / 1C / PRS 101 / PAO1).